We begin with the raw amino-acid sequence, 491 residues long: Katanin p60 ATPase-containing subunit A1 (491 aa).

An interaction with KATNB1 region spans residues 1–29 (MSLLMISENVKLAREYALLGNYDSAMVYY). Positions 1 to 75 (MSLLMISENV…VKDIMKTLES (75 aa)) are interaction with dynein and NDEL1. The tract at residues 1–185 (MSLLMISENV…EPETNKFDST (185 aa)) is interaction with microtubules. Ser-42 and Ser-109 each carry phosphoserine; by DYRK2. The segment at 87 to 185 (QHDLPASEGE…EPETNKFDST (99 aa)) is disordered. Residues 117-144 (SSQYSDPKSHGNRPSTTVRVHRSSAQNV) show a composition bias toward polar residues. Thr-133 is modified (phosphothreonine; by DYRK2). Over residues 145–169 (HNDRGKAVRCREKKEQNKGREEKNK) the composition is skewed to basic and acidic residues. Ser-170 is modified (phosphoserine). 249-256 (GPPGTGKT) lines the ATP pocket.

Belongs to the AAA ATPase family. Katanin p60 subunit A1 subfamily. In terms of assembly, can homooligomerize into hexameric rings, which may be promoted by interaction with microtubules. Interacts with KATNB1, which may serve as a targeting subunit. Interacts with ASPM; the katanin complex formation KATNA1:KATNB1 is required for the association of ASPM. Interacts with dynein and NDEL1. Associates with the E3 ligase complex containing DYRK2, EDD/UBR5, DDB1 and DCAF1 proteins (EDVP complex). Interacts with KLHL42 (via the kelch domains). Interacts with CUL3; the interaction is enhanced by KLHL42. Interacts with KATNB1 and KATNBL1. Interacts with CAMSAP2 and CAMSAP3; leading to regulate the length of CAMSAP-decorated microtubule stretches. In terms of processing, phosphorylation by DYRK2 triggers ubiquitination and subsequent degradation. Ubiquitinated by the BCR(KLHL42) E3 ubiquitin ligase complex, leading to its proteasomal degradation. Ubiquitinated by the EDVP E3 ligase complex and subsequently targeted for proteasomal degradation.

The protein localises to the cytoplasm. It is found in the midbody. Its subcellular location is the cytoskeleton. It localises to the microtubule organizing center. The protein resides in the centrosome. The protein localises to the spindle pole. It is found in the spindle. It carries out the reaction n ATP + n H2O + a microtubule = n ADP + n phosphate + (n+1) alpha/beta tubulin heterodimers.. Its activity is regulated as follows. ATPase activity is stimulated by microtubules, which promote homooligomerization. ATP-dependent microtubule severing is stimulated by interaction with KATNB1. Functionally, catalytic subunit of a complex which severs microtubules in an ATP-dependent manner. Microtubule severing may promote rapid reorganization of cellular microtubule arrays and the release of microtubules from the centrosome following nucleation. Microtubule release from the mitotic spindle poles may allow depolymerization of the microtubule end proximal to the spindle pole, leading to poleward microtubule flux and poleward motion of chromosome. Microtubule release within the cell body of neurons may be required for their transport into neuronal processes by microtubule-dependent motor proteins. This transport is required for axonal growth. In Homo sapiens (Human), this protein is Katanin p60 ATPase-containing subunit A1.